The chain runs to 468 residues: Glucose transport protein (468 aa).

At 1 to 17 (MNPSSSPSQSTANVKFV) the chain is on the cytoplasmic side. Residues 18–38 (LLISGVAALGGFLFGFDTAVI) form a helical membrane-spanning segment. Residues 39 to 58 (NGAVAALQKHFQTDSLLTGL) are Extracellular-facing. Residues 59–78 (SVSLALLGSALGAFGAGPIA) form a helical membrane-spanning segment. Over 79 to 84 (DRHGRI) the chain is Cytoplasmic. A helical membrane pass occupies residues 85-105 (KTMILAAVLFTLSSIGSGLPF). Residues 106–114 (TIWDFIFWR) are Extracellular-facing. Residues 115-135 (VLGGIGVGAASVIAPAYIAEV) form a helical membrane-spanning segment. Residues 136 to 149 (SPAHLRGRLGSLQQ) lie on the Cytoplasmic side of the membrane. A helical membrane pass occupies residues 150–170 (LAIVSGIFIALLSNWFIALMA). The Extracellular segment spans residues 171–186 (GGSAQNPWLFGAAAWR). Residues 187–207 (WMFWTELIPALLYGVCAFLIP) traverse the membrane as a helical segment. Topologically, residues 208 to 265 (ESPRYLVAQGQGEKAAAILWKVEGGDVPSRIEEIQATVSLDHKPRFSDLLSRRGGLLP) are cytoplasmic. Residues 266–286 (IVWIGMGLSALQQFVGINVIF) traverse the membrane as a helical segment. Residues 287-307 (YYSSVLWRSVGFTEEKSLLIT) lie on the Extracellular side of the membrane. A helical transmembrane segment spans residues 308 to 328 (VITGFINILTTLVAIAFVDKF). Over 329–331 (GRK) the chain is Cytoplasmic. A helical membrane pass occupies residues 332–352 (PLLLMGSIGMTITLGILSVVF). The Extracellular segment spans residues 353-366 (GGATVVNGQPTLTG). A helical membrane pass occupies residues 367–387 (AAGIIALVTANLYVFSFGFSW). Over 388–412 (GPIVWVLLGEMFNNKIRAAALSVAA) the chain is Cytoplasmic. A helical membrane pass occupies residues 413-433 (GVQWIANFIISTTFPPLLDTV). At 434–436 (GLG) the chain is on the extracellular side. Residues 437–457 (PAYGLYATSAAISIFFIWFFV) traverse the membrane as a helical segment. The Cytoplasmic portion of the chain corresponds to 458–468 (KETKGKTLEQM).

Belongs to the major facilitator superfamily. Sugar transporter (TC 2.A.1.1) family.

The protein resides in the cell membrane. The polypeptide is Glucose transport protein (gtr) (Synechocystis sp. (strain ATCC 27184 / PCC 6803 / Kazusa)).